The chain runs to 292 residues: Bifunctional protein FolD (292 aa).

Residues 166-168 (GRS), S191, and I232 contribute to the NADP(+) site.

It belongs to the tetrahydrofolate dehydrogenase/cyclohydrolase family. Homodimer.

The enzyme catalyses (6R)-5,10-methylene-5,6,7,8-tetrahydrofolate + NADP(+) = (6R)-5,10-methenyltetrahydrofolate + NADPH. It catalyses the reaction (6R)-5,10-methenyltetrahydrofolate + H2O = (6R)-10-formyltetrahydrofolate + H(+). The protein operates within one-carbon metabolism; tetrahydrofolate interconversion. Its function is as follows. Catalyzes the oxidation of 5,10-methylenetetrahydrofolate to 5,10-methenyltetrahydrofolate and then the hydrolysis of 5,10-methenyltetrahydrofolate to 10-formyltetrahydrofolate. This chain is Bifunctional protein FolD, found in Synechococcus sp. (strain RCC307).